A 581-amino-acid chain; its full sequence is MSGAELISDLRARFGQAVLSEQSTNDAFPTLWIAPDAAPAVHRYLKHDVAKPFALLADLWAIDETARKHREGQPPSGITIASHLISLGRNADIVLKCPLDAKAPRATSIASVYPNADWYEREAFDLFGVHFDGRHDHRRILLPPLWEGHPLRKDQPARATEKPPFVMTAARFDAEEKALMIDPEALGLPTERDGVELMILNYGPHSMATHGVFRVVLALDGEEIVAARPDIGFHHRGAEKMGERQSWHQFIPYTDRIDYLGGVISEMPYLQAVERLCGITVPDRAKTIRIMLSEIYRIMNHLLLYGTMAQDCGAMSPVFYMFTDRERGYRIIEAITGARMHPGWFRIGGVAADLPEGWDRLVREFLDWMPKRLDDYAGMVLGNEIFRGRTVGIAAYDTATALDWGITGPGLRATGCDWDLRKARPYGGYENFEFEVPTGNNGDCYDRVLVRVEEMRQSLRIIRQCLDHMPSGPIKADHPLTTPPPRERMLHDIDTLIHHFVGVSWGPVVPAGEATGQAETVRGLTQYALVSDGATCSYRTRIRTPSFAHLQAVSAIAPGLTVADLVAYLGSIDYVMSDVDR.

An NADH dehydrogenase I subunit C region spans residues 1 to 172 (MSGAELISDL…PPFVMTAARF (172 aa)). The tract at residues 196–581 (ELMILNYGPH…IDYVMSDVDR (386 aa)) is NADH dehydrogenase I subunit D.

The protein in the N-terminal section; belongs to the complex I 30 kDa subunit family. It in the C-terminal section; belongs to the complex I 49 kDa subunit family. NDH-1 is composed of 13 different subunits. Subunits NuoB, CD, E, F, and G constitute the peripheral sector of the complex.

It is found in the cell inner membrane. It carries out the reaction a quinone + NADH + 5 H(+)(in) = a quinol + NAD(+) + 4 H(+)(out). In terms of biological role, NDH-1 shuttles electrons from NADH, via FMN and iron-sulfur (Fe-S) centers, to quinones in the respiratory chain. The immediate electron acceptor for the enzyme in this species is believed to be ubiquinone. Couples the redox reaction to proton translocation (for every two electrons transferred, four hydrogen ions are translocated across the cytoplasmic membrane), and thus conserves the redox energy in a proton gradient. The chain is NADH-quinone oxidoreductase subunit C/D from Rhodopseudomonas palustris (strain BisA53).